Reading from the N-terminus, the 706-residue chain is Transmembrane and coiled-coil domains protein 2 (706 aa).

Disordered regions lie at residues 1-221 (MKRC…TTDT) and 251-280 (VALSLPSGPGHGDSDGPISLDVPDGAPDPQ). Ser-6 carries the phosphoserine modification. A compositionally biased stretch (basic residues) spans 83-94 (GLKHLFHSRRRS). Positions 102-112 (SQEAQQQQQQQ) are enriched in low complexity. Positions 120 to 131 (PDEKERSPEMHR) are enriched in basic and acidic residues. Arg-163 is modified (omega-N-methylarginine). Residues 330–365 (KQVFEKKNQKSAQTIAQLHKKLEHYRRRLKEIEQNG) are a coiled coil. Residue Ser-435 is modified to Phosphoserine. A disordered region spans residues 440–459 (AHLKDPMEDGPPEEAARALS). 2 positions are modified to phosphoserine: Ser-461 and Ser-467. The tract at residues 464 to 510 (LVSSPKYGSDDECSSASASSAGAGSNSGAGPGGALGSPRSNTLYGAP) is disordered. The segment covering 477–487 (SSASASSAGAG) has biased composition (low complexity). Gly residues predominate over residues 488–498 (SNSGAGPGGAL). A Phosphoserine modification is found at Ser-500. Residues 511–630 (GNLDTLLEEL…QQQQVVQLEG (120 aa)) adopt a coiled-coil conformation. 2 helical membrane passes run 646 to 666 (VILALMAVLLVFVSTIANFIT) and 679 to 699 (ALLLLVLFLLWKHWASLTYLL).

The protein belongs to the TEX28 family. As to quaternary structure, may form homodimers and heterodimers with TMCC2 or TMCC3 via the coiled-coil domains. Interacts with ribosomal proteins RPL4 and RPS6. Interacts with APOE and proteolytic processed C-terminal fragment C99 of the amyloid precursor protein (APP C99).

The protein localises to the endoplasmic reticulum membrane. Functionally, may be involved in the regulation of the proteolytic processing of the amyloid precursor protein (APP) possibly also implicating APOE. The polypeptide is Transmembrane and coiled-coil domains protein 2 (Mus musculus (Mouse)).